We begin with the raw amino-acid sequence, 255 residues long: Large ribosomal subunit protein uL4 (255 aa).

It belongs to the universal ribosomal protein uL4 family. As to quaternary structure, part of the 50S ribosomal subunit.

Functionally, one of the primary rRNA binding proteins, this protein initially binds near the 5'-end of the 23S rRNA. It is important during the early stages of 50S assembly. It makes multiple contacts with different domains of the 23S rRNA in the assembled 50S subunit and ribosome. Forms part of the polypeptide exit tunnel. In Pyrococcus horikoshii (strain ATCC 700860 / DSM 12428 / JCM 9974 / NBRC 100139 / OT-3), this protein is Large ribosomal subunit protein uL4.